A 556-amino-acid chain; its full sequence is Olefin beta-lactone synthetase (556 aa).

Residues Thr-187–Lys-195, Thr-321–Thr-326, Asp-430, and Arg-445 contribute to the ATP site.

This sequence belongs to the ATP-dependent AMP-binding enzyme family. Monomer. Forms a complex with OleB and OleD.

Its subcellular location is the cytoplasm. It catalyses the reaction a (2R,3S)-2-alkyl-3-hydroxyalkanoate + ATP = a cis-3-alkyl-4-alkyloxetan-2-one + AMP + diphosphate. Functionally, involved in olefin biosynthesis. Catalyzes the conversion of 2-alkyl-3-hydroxyalkanoic acids to beta-lactones in the presence of ATP. This is Olefin beta-lactone synthetase from Xanthomonas campestris pv. campestris (strain ATCC 33913 / DSM 3586 / NCPPB 528 / LMG 568 / P 25).